A 550-amino-acid polypeptide reads, in one-letter code: Glucose-6-phosphate isomerase 1 (550 aa).

Glutamate 355 functions as the Proton donor in the catalytic mechanism. Active-site residues include histidine 386 and lysine 512.

Belongs to the GPI family.

It localises to the cytoplasm. The catalysed reaction is alpha-D-glucose 6-phosphate = beta-D-fructose 6-phosphate. The protein operates within carbohydrate biosynthesis; gluconeogenesis. It functions in the pathway carbohydrate degradation; glycolysis; D-glyceraldehyde 3-phosphate and glycerone phosphate from D-glucose: step 2/4. Its function is as follows. Catalyzes the reversible isomerization of glucose-6-phosphate to fructose-6-phosphate. This Rhodococcus jostii (strain RHA1) protein is Glucose-6-phosphate isomerase 1.